We begin with the raw amino-acid sequence, 931 residues long: ORF4 polyprotein (931 aa).

Proteolytic processing of ORF4 polyprotein yields the VP4a, VP4b and VP4c capsid proteins.

Its subcellular location is the virion. Functionally, ORF4 polyprotein codes for VP4a, VP4b, and VP4c, three of the four proteins that self-assemble to form the icosahedral capsid. The capsid is made of VP3 (coded by ORF3), VP4a, VP4b and VP4c. This Drosophila melanogaster (Fruit fly) protein is ORF4 polyprotein.